Here is a 255-residue protein sequence, read N- to C-terminus: tRNA (guanine-N(1)-)-methyltransferase (255 aa).

S-adenosyl-L-methionine-binding positions include G121 and 141–146 (IGDYVL). The interval 236–255 (PVKAPNRAGRQKTPKNKTDG) is disordered. The span at 244 to 255 (GRQKTPKNKTDG) shows a compositional bias: basic residues.

The protein belongs to the RNA methyltransferase TrmD family. As to quaternary structure, homodimer.

The protein localises to the cytoplasm. It carries out the reaction guanosine(37) in tRNA + S-adenosyl-L-methionine = N(1)-methylguanosine(37) in tRNA + S-adenosyl-L-homocysteine + H(+). Functionally, specifically methylates guanosine-37 in various tRNAs. This Bradyrhizobium diazoefficiens (strain JCM 10833 / BCRC 13528 / IAM 13628 / NBRC 14792 / USDA 110) protein is tRNA (guanine-N(1)-)-methyltransferase.